Consider the following 346-residue polypeptide: tRNA/tmRNA (uracil-C(5))-methyltransferase (346 aa).

S-adenosyl-L-methionine is bound by residues glutamine 168, tyrosine 197, asparagine 202, glutamate 218, and aspartate 278. Cysteine 303 functions as the Nucleophile in the catalytic mechanism. Catalysis depends on glutamate 337, which acts as the Proton acceptor.

The protein belongs to the class I-like SAM-binding methyltransferase superfamily. RNA M5U methyltransferase family. TrmA subfamily.

It carries out the reaction uridine(54) in tRNA + S-adenosyl-L-methionine = 5-methyluridine(54) in tRNA + S-adenosyl-L-homocysteine + H(+). It catalyses the reaction uridine(341) in tmRNA + S-adenosyl-L-methionine = 5-methyluridine(341) in tmRNA + S-adenosyl-L-homocysteine + H(+). In terms of biological role, dual-specificity methyltransferase that catalyzes the formation of 5-methyluridine at position 54 (m5U54) in all tRNAs, and that of position 341 (m5U341) in tmRNA (transfer-mRNA). This Campylobacter lari (strain RM2100 / D67 / ATCC BAA-1060) protein is tRNA/tmRNA (uracil-C(5))-methyltransferase.